The sequence spans 88 residues: UPF0297 protein BcerKBAB4_4234 (88 aa).

Belongs to the UPF0297 family.

The protein is UPF0297 protein BcerKBAB4_4234 of Bacillus mycoides (strain KBAB4) (Bacillus weihenstephanensis).